Consider the following 193-residue polypeptide: Xanthine phosphoribosyltransferase (193 aa).

Xanthine contacts are provided by L20 and T27. 128–132 contacts 5-phospho-alpha-D-ribose 1-diphosphate; it reads ANGQA. K156 is a binding site for xanthine.

It belongs to the purine/pyrimidine phosphoribosyltransferase family. Xpt subfamily. As to quaternary structure, homodimer.

It is found in the cytoplasm. The catalysed reaction is XMP + diphosphate = xanthine + 5-phospho-alpha-D-ribose 1-diphosphate. It functions in the pathway purine metabolism; XMP biosynthesis via salvage pathway; XMP from xanthine: step 1/1. Functionally, converts the preformed base xanthine, a product of nucleic acid breakdown, to xanthosine 5'-monophosphate (XMP), so it can be reused for RNA or DNA synthesis. This chain is Xanthine phosphoribosyltransferase, found in Streptococcus gordonii (strain Challis / ATCC 35105 / BCRC 15272 / CH1 / DL1 / V288).